A 445-amino-acid chain; its full sequence is Gamma conglutin 2 (445 aa).

A signal peptide spans 1–33 (MAQNMAPIFHFIAISLSCSFLFVLSSSQDSQSL). A Peptidase A1 domain is found at 60-425 (HWANIHKRTP…DFAKSRVEFN (366 aa)). Cystine bridges form between cysteine 88-cysteine 178, cysteine 102-cysteine 115, cysteine 107-cysteine 133, cysteine 118-cysteine 128, and cysteine 346-cysteine 387. N-linked (GlcNAc...) asparagine glycosylation occurs at asparagine 130.

Belongs to the peptidase A1 family. In terms of assembly, two-subunit monomeric unit made of alpha and beta subunits coupled by disulfide bonds (at pH 4.5 and under non-reducing conditions). Can also form oligomers including dimer, tetramer and cyclic hexamer (trimer of dimers) (at pH &gt; 5.5). Component of globulins complexes which accumulate in seeds. Interacts with flavonoids (e.g. apigenin glucosides) present in globulins complexes. Glycosylated on alpha chain.

The protein resides in the secreted. It is found in the extracellular space. Functionally, sulfur-rich seed storage protein that remains undegraded at germination. This Lupinus angustifolius (Narrow-leaved blue lupine) protein is Gamma conglutin 2.